A 247-amino-acid polypeptide reads, in one-letter code: MNVLLCSINTLKRLYDISAVEVGQHFYWQIGSFQVHAQVLITSWVVIALLLVSAILIIRNLQTIPAFGQNFFEYVLEFIRDVSKTQIGEEYGPWVPFIGTLFLFIFVSNWSGALLPWKIIQLPHGELAAPTNDINTTVALALLTSIAYFYAGLSKKGLAYFNKYIQPTPILLPINILEDFTKPLSLSFRLFGNILADELVVVVLVSLVPLVVPIPVMFLGLFTSGIQALIFATLAAAYIGESMEGHH.

The next 5 membrane-spanning stretches (helical) occupy residues 38 to 58 (QVLI…ILII), 95 to 115 (VPFI…GALL), 134 to 154 (INTT…AGLS), 199 to 219 (LVVV…VMFL), and 220 to 240 (GLFT…AYIG).

The protein belongs to the ATPase A chain family. In terms of assembly, F-type ATPases have 2 components, CF(1) - the catalytic core - and CF(0) - the membrane proton channel. CF(1) has five subunits: alpha(3), beta(3), gamma(1), delta(1), epsilon(1). CF(0) has four main subunits: a, b, b' and c.

It is found in the plastid. The protein localises to the chloroplast thylakoid membrane. Its function is as follows. Key component of the proton channel; it plays a direct role in the translocation of protons across the membrane. This is ATP synthase subunit a, chloroplastic from Glycine max (Soybean).